Reading from the N-terminus, the 353-residue chain is tRNA N(3)-cytidine methyltransferase METTL2 (353 aa).

The interval 1-37 is disordered; that stretch reads MAAPVVAADSPVIENMPETAGGATENSAEAQKRPQFG. S-adenosyl-L-methionine contacts are provided by Trp93, Tyr97, Gly165, Asp190, Asp216, and Ile237.

This sequence belongs to the methyltransferase superfamily. METL family. As to quaternary structure, monomer.

It is found in the cytoplasm. The enzyme catalyses cytidine(32) in tRNA(Thr) + S-adenosyl-L-methionine = N(3)-methylcytidine(32) in tRNA(Thr) + S-adenosyl-L-homocysteine + H(+). It catalyses the reaction cytidine(32) in tRNA(Arg)(CCU) + S-adenosyl-L-methionine = N(3)-methylcytidine(32) in tRNA(Arg)(CCU) + S-adenosyl-L-homocysteine + H(+). In terms of biological role, S-adenosyl-L-methionine-dependent methyltransferase that mediates N(3)-methylcytidine modification of residue 32 of the tRNA anticodon loop of tRNA(Thr)(UGU) and tRNA(Arg)(CCU). N(3)-methylcytidine methylation by mettl2a requires the N6-threonylcarbamoylation of tRNA (t6A37) by the EKC/KEOPS complex as prerequisite. The chain is tRNA N(3)-cytidine methyltransferase METTL2 (mettl2a) from Danio rerio (Zebrafish).